Consider the following 77-residue polypeptide: Large ribosomal subunit protein eL14 (77 aa).

It belongs to the eukaryotic ribosomal protein eL14 family.

The protein is Large ribosomal subunit protein eL14 of Methanococcus maripaludis (strain C7 / ATCC BAA-1331).